Here is a 138-residue protein sequence, read N- to C-terminus: Protein Turandot B (138 aa).

The signal sequence occupies residues 1–21 (MNFKTSLICFALLLIGTLCSA).

Belongs to the Turandot family.

Its subcellular location is the secreted. Its function is as follows. A humoral factor that may play a role in stress tolerance. The polypeptide is Protein Turandot B (Drosophila melanogaster (Fruit fly)).